A 102-amino-acid polypeptide reads, in one-letter code: Protein B1 (102 aa).

Residues 1–102 (MLNDAKQTRA…AQPQPSNNRK (102 aa)) are disordered. Composition is skewed to polar residues over residues 8–17 (TRANPGTSRP) and 51–65 (GKTNGKSDGNITAGE). Basic residues predominate over residues 75–88 (KGPRGGKTNTRRTP).

In terms of biological role, not known. Encoded on a subgenomic RNA (RNA3) synthesized during replication and which is co-terminal with RNA1. The sequence is that of Protein B1 (B1) from Black beetle virus (BBV).